The following is a 335-amino-acid chain: uncharacterized protein (335 aa).

Helical transmembrane passes span 104-124, 128-148, 280-300, and 310-330; these read FKKVVIYMIITFLALLFMGLL, LLQGFVNGLIGAGIILVLSLF, LAFGVGLILPFTGMILSTMIG, and TINLLLLKIGPLLTLIFGIFV.

Its subcellular location is the cell membrane. This is an uncharacterized protein from Methanocaldococcus jannaschii (strain ATCC 43067 / DSM 2661 / JAL-1 / JCM 10045 / NBRC 100440) (Methanococcus jannaschii).